A 470-amino-acid chain; its full sequence is Putative multidrug resistance protein MdtD (470 aa).

The Periplasmic segment spans residues 1–11 (MTELPDNTRWQ). The chain crosses the membrane as a helical span at residues 12 to 32 (LWIVAFGFFMQSLDTTIVNTA). Residues 33-48 (LPSMAKSLGESPLHMH) are Cytoplasmic-facing. The helical transmembrane segment at 49-69 (MVVVSYVLTVAVMLPASGWLA) threads the bilayer. The Periplasmic portion of the chain corresponds to 70–76 (DKIGVRN). A helical membrane pass occupies residues 77-97 (IFFAAIVLFTLGSLFCALSGT). Over 98–101 (LNQL) the chain is Cytoplasmic. The helical transmembrane segment at 102-124 (VLARVLQGVGGAMMVPVGRLTVM) threads the bilayer. Residues 125-137 (KIVPRTQYMAAMT) lie on the Periplasmic side of the membrane. A helical membrane pass occupies residues 138–158 (FVTLPGQIGPLLGPALGGVLV). Residues 159–164 (EYASWH) are Cytoplasmic-facing. The chain crosses the membrane as a helical span at residues 165-185 (WIFLINIPVGIVGAMATFMLM). Over 186 to 196 (PNYTIETRRFD) the chain is Periplasmic. A helical transmembrane segment spans residues 197–217 (LPGFLLLAIGMAVLTLALDGS). Topologically, residues 218-224 (KSMGISP) are cytoplasmic. Residues 225-245 (WTLAGLAAGGAAAILLYLFHA) traverse the membrane as a helical segment. Topologically, residues 246 to 262 (KKNSGALFSLRLFRTPT) are periplasmic. Residues 263-283 (FSLGLLGSFAGRIGSGMLPFM) form a helical membrane-spanning segment. The Cytoplasmic segment spans residues 284 to 285 (TP). A helical transmembrane segment spans residues 286-306 (VFLQIGLGFSPFHAGLMMIPM). The Periplasmic portion of the chain corresponds to 307–341 (VLGSMGMKRIVVQIVNRFGYRRVLVATTLGLALVS). Residues 342 to 362 (LLFMSVALLGWYYLLPLVLLL) form a helical membrane-spanning segment. Over 363–395 (QGMVNSARFSSMNTLTLKDLPDTLASSGNSLLS) the chain is Cytoplasmic. A helical transmembrane segment spans residues 396-416 (MIMQLSMSIGVTIAGMLLGMF). Over 417 to 430 (GQQHIGIDSSATHH) the chain is Periplasmic. Residues 431 to 451 (VFMYTWLCMAVIIALPAIIFA) traverse the membrane as a helical segment. Over 452–470 (RVPNDTQQNMVISRRKRSL) the chain is Cytoplasmic.

Belongs to the major facilitator superfamily. TCR/Tet family.

The protein resides in the cell inner membrane. The polypeptide is Putative multidrug resistance protein MdtD (Salmonella dublin (strain CT_02021853)).